A 680-amino-acid chain; its full sequence is ATPase family AAA domain-containing protein FIGL1 (680 aa).

Disordered regions lie at residues Tyr-214–Arg-234, Phe-250–Asn-275, and Val-288–Thr-352. The segment covering Thr-295 to Lys-308 has biased composition (polar residues). Residues Arg-313–Arg-323 are compositionally biased toward gly residues. The span at Thr-336–Ser-346 shows a compositional bias: polar residues. ATP is bound by residues Ala-406 and Gly-446 to Met-451.

The protein belongs to the AAA ATPase family. It depends on Mg(2+) as a cofactor.

It is found in the nucleus. The enzyme catalyses ATP + H2O = ADP + phosphate + H(+). In terms of biological role, involved in DNA double-strand break (DBS) repair via homologous recombination (HR). Limits class II meiotic crossover (CO) formation by regulating the invasion step of meiotic HR. May counteract DMC1 and RAD51-mediated inter-homolog strand invasion to limit CO formation. Functions independently of FANCM. This is ATPase family AAA domain-containing protein FIGL1 from Arabidopsis thaliana (Mouse-ear cress).